Reading from the N-terminus, the 512-residue chain is Kelch repeat protein C2 (512 aa).

In terms of domain architecture, BTB spans 2–67; sequence ESVIFSINGE…MRWKKINITV (66 aa). In terms of domain architecture, BACK spans 102–176; sequence CIRMFNFSKR…LLKWIHKNPN (75 aa). 6 Kelch repeats span residues 216–261, 262–307, 309–354, 356–403, 405–449, and 452–498; these read IKHN…LYNC, LYII…VNDG, LYVI…FVND, IYVM…EYDG, IYAI…SCGD, and LIIA…THKS.

This sequence belongs to the poxviruses Kelch family.

This is Kelch repeat protein C2 from Camelus.